Reading from the N-terminus, the 258-residue chain is Enterotoxin type G (258 aa).

A signal peptide spans 1–25 (MKKLSTVIIILILEIVFHNMNYVNA). A disulfide bond links Cys116 and Cys133.

It belongs to the staphylococcal/streptococcal toxin family.

The protein localises to the secreted. Its function is as follows. Staphylococcal enterotoxins cause the intoxication staphylococcal food poisoning syndrome. The illness is characterized by high fever, hypotension, diarrhea, shock, and in some cases death. This is Enterotoxin type G (entG) from Staphylococcus aureus (strain N315).